We begin with the raw amino-acid sequence, 245 residues long: Derlin-1 (245 aa).

The Cytoplasmic segment spans residues 1-5; it reads MDLEN. The helical transmembrane segment at 6 to 26 threads the bilayer; the sequence is FLLGIPIVTRYWFLASTIIPL. The Lumenal portion of the chain corresponds to 27-57; that stretch reads LGRFGFINVQWMFLQWDLVVNKFQFWRPLTA. Residues 58 to 78 form a helical membrane-spanning segment; the sequence is LIYYPVTPQTGFHWLMMCYFL. The Cytoplasmic portion of the chain corresponds to 79–100; it reads YNYSKALESETYRGRSADYLFM. A helical transmembrane segment spans residues 101–121; that stretch reads LIFNWFFCSGLCMALDIYFLL. Residues 122-166 are Lumenal-facing; sequence EPMVISVLYVWCQVNKDTIVSFWFGMRFPARYLPWVLWGFNAVLR. Residues 167-187 form a helical membrane-spanning segment; sequence GGGTNELVGILVGHAYFFVAL. Over 188–245 the chain is Cytoplasmic; sequence KYPDEYGVDLISTPEFLHRLIPDEDGGIHGQDGNIRGARQQPRGHQWPGGVGARLGGN. The interval 218 to 245 is disordered; the sequence is QDGNIRGARQQPRGHQWPGGVGARLGGN. Positions 234–245 are enriched in gly residues; that stretch reads WPGGVGARLGGN.

Belongs to the derlin family.

The protein resides in the endoplasmic reticulum membrane. Functionally, specifically required for the degradation process of misfolded endoplasmic reticulum (ER) luminal proteins. Participates in the transfer of misfolded proteins from the ER to the cytosol, where they are destroyed by the proteasome in a ubiquitin-dependent manner. This Caenorhabditis elegans protein is Derlin-1.